The chain runs to 608 residues: Pentatricopeptide repeat-containing protein 1, apicoplast (608 aa).

PPR repeat units lie at residues 165–199 (TTLAFNAAMSAVEKKGCLSTMLDLIGTMKSKNIKP), 200–230 (DLVSYKLVLSLCDKYHLVDTAEILFEEMIES), 236–270 (NYEIYAIMISCYAKTGNGYKAIELFEKLRNDPFVE), 336–370 (QYSEYANVIYACNISNLYEQGIKYFEELLKSGKYM), 372–402 (SIFVFENIFDLLSKNGDYEKSLEYYNNLKND), 410–445 (NVNILNNLLKALSIHNKINVAEDIWNNEFDELLLTP), and 446–480 (NNLSYQILLKIYSHIDNYEKAFKLFKEMQVNKLLN).

It belongs to the PPR family. P subfamily. As to quaternary structure, homodimer.

The protein localises to the plastid. The protein resides in the apicoplast. Its function is as follows. Binds to apicoplast RNA transcripts, preferentially to the motif UUAU, and protects RNA transcripts from degradation by ribonuclease. The chain is Pentatricopeptide repeat-containing protein 1, apicoplast from Plasmodium falciparum (isolate 3D7).